Consider the following 625-residue polypeptide: Chaperone protein HtpG (625 aa).

Positions 1-337 are a; substrate-binding; the sequence is MSTNQETRGF…TNDLPLNVSR (337 aa). The segment at 338–554 is b; the sequence is EILQENKITA…NDEMTTQMAK (217 aa). The tract at residues 555–625 is c; sequence LFAAMGQKAP…FIKRMNKLLG (71 aa).

Belongs to the heat shock protein 90 family. In terms of assembly, homodimer.

The protein resides in the cytoplasm. Molecular chaperone. Has ATPase activity. This chain is Chaperone protein HtpG, found in Actinobacillus pleuropneumoniae serotype 3 (strain JL03).